Reading from the N-terminus, the 405-residue chain is uncharacterized protein (405 aa).

This is an uncharacterized protein from Schizosaccharomyces pombe (strain 972 / ATCC 24843) (Fission yeast).